The sequence spans 766 residues: Ribonuclease Z, mitochondrial (766 aa).

The transit peptide at Met-1–Ala-25 directs the protein to the mitochondrion.

The protein belongs to the RNase Z family. As to quaternary structure, homodimer. It depends on Zn(2+) as a cofactor.

It localises to the nucleus. Its subcellular location is the mitochondrion. The catalysed reaction is Endonucleolytic cleavage of RNA, removing extra 3' nucleotides from tRNA precursor, generating 3' termini of tRNAs. A 3'-hydroxy group is left at the tRNA terminus and a 5'-phosphoryl group is left at the trailer molecule.. In terms of biological role, zinc phosphodiesterase, which displays some tRNA 3'-processing endonuclease activity of nuclear and mitochondrial pre-tRNA. Probably involved in tRNA maturation, by removing a 3'-trailer from precursor tRNA. May participate in tRNA processing in the developing embryo. In Drosophila melanogaster (Fruit fly), this protein is Ribonuclease Z, mitochondrial.